Here is an 892-residue protein sequence, read N- to C-terminus: Transmembrane channel-like protein 2-B (892 aa).

Positions 29-125 (GINQNLRREE…DESMSEGEMA (97 aa)) are disordered. 2 stretches are compositionally biased toward basic residues: residues 48–58 (RRAKKRRMNRR) and 66–77 (RSKKMRMRVRKN). The segment covering 103 to 112 (PSSCSSSSDN) has biased composition (low complexity). The next 9 helical transmembrane spans lie at 235–255 (LVLF…MGIP), 275–295 (FSVL…YGFY), 308–328 (LPLS…MVVI), 403–423 (LANV…YAVV), 444–464 (EVEI…EAIA), 482–502 (IFAL…DEVN), 616–636 (LIFN…LVGI), 671–691 (FYMG…IYSI), and 736–756 (GLII…LNAV). Positions 772-785 (QMQRDEEKNRRNNK) are enriched in basic and acidic residues. 2 disordered regions span residues 772–791 (QMQR…TNQV) and 796–892 (EDLL…PPRR). The segment covering 862-878 (PRQPGPLPGNPRGPPPG) has biased composition (pro residues).

This sequence belongs to the TMC family. In adults, expression is restricted to the hair cells of inner ear and lateral line organ. Expressed at higher levels in the larval lateral-line neuromasts than in the larval inner ear.

It localises to the membrane. Functionally, probable component of the mechanotransducer (MET) non-selective cation channel. The polypeptide is Transmembrane channel-like protein 2-B (Danio rerio (Zebrafish)).